The following is a 206-amino-acid chain: Translation initiation factor IF-3 (206 aa).

Belongs to the IF-3 family. Monomer.

It is found in the cytoplasm. In terms of biological role, IF-3 binds to the 30S ribosomal subunit and shifts the equilibrium between 70S ribosomes and their 50S and 30S subunits in favor of the free subunits, thus enhancing the availability of 30S subunits on which protein synthesis initiation begins. The chain is Translation initiation factor IF-3 from Shigella flexneri.